The sequence spans 160 residues: Major strawberry allergen Fra a 1-D (160 aa).

Belongs to the BetVI family. As to quaternary structure, monomer.

This is Major strawberry allergen Fra a 1-D from Fragaria ananassa (Strawberry).